A 479-amino-acid chain; its full sequence is Ribosomal RNA small subunit methyltransferase F (479 aa).

Residues 128 to 134 (ASAPGSK), glutamate 152, aspartate 179, and aspartate 197 contribute to the S-adenosyl-L-methionine site. Cysteine 250 serves as the catalytic Nucleophile.

This sequence belongs to the class I-like SAM-binding methyltransferase superfamily. RsmB/NOP family.

Its subcellular location is the cytoplasm. The catalysed reaction is cytidine(1407) in 16S rRNA + S-adenosyl-L-methionine = 5-methylcytidine(1407) in 16S rRNA + S-adenosyl-L-homocysteine + H(+). Functionally, specifically methylates the cytosine at position 1407 (m5C1407) of 16S rRNA. This Shewanella halifaxensis (strain HAW-EB4) protein is Ribosomal RNA small subunit methyltransferase F.